Here is a 365-residue protein sequence, read N- to C-terminus: 2-aminoethylphosphonate--pyruvate transaminase (365 aa).

N6-(pyridoxal phosphate)lysine is present on Lys-194.

The protein belongs to the class-V pyridoxal-phosphate-dependent aminotransferase family. PhnW subfamily. In terms of assembly, homodimer. Pyridoxal 5'-phosphate is required as a cofactor.

It catalyses the reaction (2-aminoethyl)phosphonate + pyruvate = phosphonoacetaldehyde + L-alanine. Functionally, involved in phosphonate degradation. This chain is 2-aminoethylphosphonate--pyruvate transaminase, found in Bacillus cereus (strain 03BB102).